Reading from the N-terminus, the 37-residue chain is Large ribosomal subunit protein bL36 (37 aa).

It belongs to the bacterial ribosomal protein bL36 family.

The polypeptide is Large ribosomal subunit protein bL36 (Mycoplasmopsis pulmonis (strain UAB CTIP) (Mycoplasma pulmonis)).